The primary structure comprises 501 residues: ATP synthase subunit alpha (501 aa).

Residue 169-176 (GDRQTGKT) participates in ATP binding.

Belongs to the ATPase alpha/beta chains family. In terms of assembly, F-type ATPases have 2 components, CF(1) - the catalytic core - and CF(0) - the membrane proton channel. CF(1) has five subunits: alpha(3), beta(3), gamma(1), delta(1), epsilon(1). CF(0) has three main subunits: a(1), b(2) and c(9-12). The alpha and beta chains form an alternating ring which encloses part of the gamma chain. CF(1) is attached to CF(0) by a central stalk formed by the gamma and epsilon chains, while a peripheral stalk is formed by the delta and b chains.

It localises to the cell membrane. The catalysed reaction is ATP + H2O + 4 H(+)(in) = ADP + phosphate + 5 H(+)(out). Produces ATP from ADP in the presence of a proton gradient across the membrane. The alpha chain is a regulatory subunit. The chain is ATP synthase subunit alpha from Streptococcus uberis (strain ATCC BAA-854 / 0140J).